The following is a 389-amino-acid chain: MASSLKKLITSFLLFFFYTIIVASSEPSCRRYKSIISFGDSIADTGNYLHLSDVNHPPQAAFLPYGETFFSVPTGRDSDGRLIIDFIAEFLGLPYVPPYFGSQNVSFEQGVNFAVYGATALDRAFFIEKGIVSDFTNVSLSVQLNTFKQILPTLCASSSRDCREMLGDSLILMGESGGNDYNYPFFEDKSINEIKELTPLIIKAISDAIVDLIDLGGKTFLVPGSFPVGCSAAYLTLFQTAKEKDYDPLTGCLPWLNDFGKHHDEQLKTEIRRLRKLYPHVNIMYADYYNSLYRLYQKPTKYGFKNRPLAACCGVGGQYNFTIGEECGYEGVGYCQNPSEYINWDGYHITEAAHQKMAHGILNGPYATPAFNWSCLDAASVDNESSFGS.

The first 25 residues, 1–25, serve as a signal peptide directing secretion; sequence MASSLKKLITSFLLFFFYTIIVASS. Catalysis depends on Ser-41, which acts as the Nucleophile. N-linked (GlcNAc...) asparagine glycans are attached at residues Asn-104, Asn-137, and Asn-320. Residues Asp-345 and His-348 contribute to the active site. N-linked (GlcNAc...) asparagine glycans are attached at residues Asn-372 and Asn-383.

The protein belongs to the 'GDSL' lipolytic enzyme family. In terms of tissue distribution, expressed in most tissues or organs of the mature seedlings. Not expressed in roots of mature seedlings.

It is found in the secreted. It carries out the reaction O-sinapoylcholine + H2O = (E)-sinapate + choline + H(+). With respect to regulation, inhibited by PMSF. Sinapine esterase that catalyzes that hydrolysis of sinapine, releasing choline and sinapate. Sinapine (O-sinapoylcholine) is the predominant phenolic compound in a complex group of sinapate esters in seeds of oilseed rape (B.napus). Sinapine has antinutritive activity and prevents the use of seed protein for food and feed. Shows broad substrate specificity towards various other choline esters, including phosphatidylcholine. This chain is Sinapine esterase, found in Brassica napus (Rape).